The chain runs to 232 residues: Sec-independent protein translocase protein TatB (232 aa).

The helical transmembrane segment at 1 to 21 (MFDIGFGELMLLFVIGLVVLG) threads the bilayer. 2 disordered regions span residues 108-129 (EPHTIHNPLVTDPEALHDGVTP) and 176-232 (AAST…NNDR). Composition is skewed to low complexity over residues 189-203 (ADSAANLATQAATPA) and 214-232 (RAATATGPASSTSPLNNDR).

Belongs to the TatB family. The Tat system comprises two distinct complexes: a TatABC complex, containing multiple copies of TatA, TatB and TatC subunits, and a separate TatA complex, containing only TatA subunits. Substrates initially bind to the TatABC complex, which probably triggers association of the separate TatA complex to form the active translocon.

It localises to the cell inner membrane. Its function is as follows. Part of the twin-arginine translocation (Tat) system that transports large folded proteins containing a characteristic twin-arginine motif in their signal peptide across membranes. Together with TatC, TatB is part of a receptor directly interacting with Tat signal peptides. TatB may form an oligomeric binding site that transiently accommodates folded Tat precursor proteins before their translocation. The protein is Sec-independent protein translocase protein TatB of Sodalis glossinidius (strain morsitans).